Reading from the N-terminus, the 428-residue chain is UDP-N-acetylglucosamine 1-carboxyvinyltransferase 2 (428 aa).

Residue Lys22–Asn23 participates in phosphoenolpyruvate binding. Arg92 is a binding site for UDP-N-acetyl-alpha-D-glucosamine. The active-site Proton donor is the Cys116. Cys116 is subject to 2-(S-cysteinyl)pyruvic acid O-phosphothioketal. UDP-N-acetyl-alpha-D-glucosamine is bound by residues Arg121–Gln125, Asp304, and Ile326.

The protein belongs to the EPSP synthase family. MurA subfamily.

It localises to the cytoplasm. It catalyses the reaction phosphoenolpyruvate + UDP-N-acetyl-alpha-D-glucosamine = UDP-N-acetyl-3-O-(1-carboxyvinyl)-alpha-D-glucosamine + phosphate. Its pathway is cell wall biogenesis; peptidoglycan biosynthesis. Its function is as follows. Cell wall formation. Adds enolpyruvyl to UDP-N-acetylglucosamine. The sequence is that of UDP-N-acetylglucosamine 1-carboxyvinyltransferase 2 from Geobacillus kaustophilus (strain HTA426).